Reading from the N-terminus, the 191-residue chain is Protein LURP-one-related 6 (191 aa).

It belongs to the LOR family.

In terms of biological role, might be related to the phospholipid scramblase and tubby-like superfamily of membrane tethered transcription factors. This chain is Protein LURP-one-related 6, found in Arabidopsis thaliana (Mouse-ear cress).